The chain runs to 396 residues: Probable mannan endo-1,4-beta-mannosidase A-2 (396 aa).

An N-terminal signal peptide occupies residues 1–21 (MKVPRLLLALGGLASIHIASA). W99 is a binding site for substrate. N120 carries N-linked (GlcNAc...) asparagine glycosylation. N212 is a substrate binding site. E213 acts as the Proton donor in catalysis. A glycan (N-linked (GlcNAc...) asparagine) is linked at N270. Y288 is a substrate binding site. The Nucleophile role is filled by E321. Residue W351 participates in substrate binding.

It belongs to the glycosyl hydrolase 5 (cellulase A) family.

Its subcellular location is the secreted. The catalysed reaction is Random hydrolysis of (1-&gt;4)-beta-D-mannosidic linkages in mannans, galactomannans and glucomannans.. Functionally, endo-1,4-mannanase, a crucial enzyme for depolymerization of seed galactomannans and wood galactoglucomannans. The polypeptide is Probable mannan endo-1,4-beta-mannosidase A-2 (manA-2) (Aspergillus terreus (strain NIH 2624 / FGSC A1156)).